A 369-amino-acid polypeptide reads, in one-letter code: 4-hydroxy-3-methylbut-2-en-1-yl diphosphate synthase (flavodoxin) (369 aa).

[4Fe-4S] cluster is bound by residues C270, C273, C305, and E312.

The protein belongs to the IspG family. [4Fe-4S] cluster serves as cofactor.

The catalysed reaction is (2E)-4-hydroxy-3-methylbut-2-enyl diphosphate + oxidized [flavodoxin] + H2O + 2 H(+) = 2-C-methyl-D-erythritol 2,4-cyclic diphosphate + reduced [flavodoxin]. The protein operates within isoprenoid biosynthesis; isopentenyl diphosphate biosynthesis via DXP pathway; isopentenyl diphosphate from 1-deoxy-D-xylulose 5-phosphate: step 5/6. Its function is as follows. Converts 2C-methyl-D-erythritol 2,4-cyclodiphosphate (ME-2,4cPP) into 1-hydroxy-2-methyl-2-(E)-butenyl 4-diphosphate. This is 4-hydroxy-3-methylbut-2-en-1-yl diphosphate synthase (flavodoxin) from Psychromonas ingrahamii (strain DSM 17664 / CCUG 51855 / 37).